The primary structure comprises 267 residues: 7alpha-hydroxysteroid dehydrogenase (267 aa).

NADP(+)-binding positions include 13-18, Arg38, 63-64, and Asn90; these read SATRGI and DA. Residues Ser145 and Tyr158 each coordinate cholate. Residues Tyr158, Lys162, and 191 to 195 contribute to the NADP(+) site; that span reads IATDA. The active-site Proton acceptor is Tyr158.

The protein belongs to the short-chain dehydrogenases/reductases (SDR) family. As to quaternary structure, homotetramer.

It carries out the reaction cholate + NADP(+) = 3alpha,12alpha-dihydroxy-7-oxo-5beta-cholanate + NADPH + H(+). It catalyses the reaction chenodeoxycholate + NADP(+) = 7-oxolithocholate + NADPH + H(+). In terms of biological role, 7alpha-hydroxysteroid dehydrogenase that catalyzes the NADP(+)-dependent oxidation of the 7alpha-hydroxy group of 7alpha-hydroxysteroids, such as the major human bile acids cholate and chenodeoxycholate, to the corresponding 7-oxosteroids. Is thus liley involved in the metabolism of primary bile acids. The protein is 7alpha-hydroxysteroid dehydrogenase of Paraclostridium sordellii (Clostridium sordellii).